Consider the following 68-residue polypeptide: MFTLKKSLLLLFFLGTINLSLCQEERNADEEERRDERNVEVEKRILPFVAGVAAEMMQHVYCAASKKC.

The signal sequence occupies residues 1 to 22 (MFTLKKSLLLLFFLGTINLSLC). A propeptide spanning residues 23–42 (QEERNADEEERRDERNVEVE) is cleaved from the precursor. An intrachain disulfide couples Cys62 to Cys68.

In terms of tissue distribution, expressed by the skin glands.

Its subcellular location is the secreted. Antimicrobial peptide. The polypeptide is Lividin-1 (Odorrana livida (Green mountain frog)).